We begin with the raw amino-acid sequence, 346 residues long: Biotin synthase (346 aa).

The 219-residue stretch at 38 to 256 (QQVQVSTLLS…IAVARIMMPT (219 aa)) folds into the Radical SAM core domain. [4Fe-4S] cluster is bound by residues Cys53, Cys57, and Cys60. 4 residues coordinate [2Fe-2S] cluster: Cys97, Cys128, Cys188, and Arg260.

Belongs to the radical SAM superfamily. Biotin synthase family. In terms of assembly, homodimer. [4Fe-4S] cluster serves as cofactor. Requires [2Fe-2S] cluster as cofactor.

It carries out the reaction (4R,5S)-dethiobiotin + (sulfur carrier)-SH + 2 reduced [2Fe-2S]-[ferredoxin] + 2 S-adenosyl-L-methionine = (sulfur carrier)-H + biotin + 2 5'-deoxyadenosine + 2 L-methionine + 2 oxidized [2Fe-2S]-[ferredoxin]. It functions in the pathway cofactor biosynthesis; biotin biosynthesis; biotin from 7,8-diaminononanoate: step 2/2. Functionally, catalyzes the conversion of dethiobiotin (DTB) to biotin by the insertion of a sulfur atom into dethiobiotin via a radical-based mechanism. This is Biotin synthase from Salmonella choleraesuis (strain SC-B67).